The chain runs to 157 residues: Protein-export protein SecB (157 aa).

This sequence belongs to the SecB family. Homotetramer, a dimer of dimers. One homotetramer interacts with 1 SecA dimer.

Its subcellular location is the cytoplasm. One of the proteins required for the normal export of preproteins out of the cell cytoplasm. It is a molecular chaperone that binds to a subset of precursor proteins, maintaining them in a translocation-competent state. It also specifically binds to its receptor SecA. The protein is Protein-export protein SecB of Shewanella frigidimarina (strain NCIMB 400).